The sequence spans 390 residues: MPPRSLSNLSFPTEANESELVPEVWEKDFLPDSDGTTAELVIRCVIPSLYLIIISVGLLGNIMLVKIFLTNSAMRNVPNIFISNLAAGDLLLLLTCVPVDASRYFFDEWVFGKLGCKLIPAIQLTSVGVSVFTLTALSADRYRAIVNPMDMQTSGVLLWTSLKAVGIWVVSVLLAVPEAVFSEVARIGSLDNSSFTACIPYPQTDELHPKIHSVLIFLVYFLIPLVIISIYYYHIAKTLIKSAHNLPGEYNEHTKKQMETRKRLAKIVLVFVGCFVFCWFPNHVLYLYRSFNYKEIDPSLGHMIVTLVARVLSFSNSCVNPFALYLLSESFRKHFNSQLCCGRKSYPERSTSYLLSSSAVRMTSLKSNTKNVVTNSVLLNGHSTKQEIAL.

The Extracellular portion of the chain corresponds to 1 to 41 (MPPRSLSNLSFPTEANESELVPEVWEKDFLPDSDGTTAELV). Residues N8 and N16 are each glycosylated (N-linked (GlcNAc...) asparagine). A helical transmembrane segment spans residues 42 to 65 (IRCVIPSLYLIIISVGLLGNIMLV). Residues 66 to 79 (KIFLTNSAMRNVPN) lie on the Cytoplasmic side of the membrane. A helical membrane pass occupies residues 80 to 99 (IFISNLAAGDLLLLLTCVPV). The Extracellular segment spans residues 100 to 117 (DASRYFFDEWVFGKLGCK). A disulfide bond links C116 and C198. A helical transmembrane segment spans residues 118–139 (LIPAIQLTSVGVSVFTLTALSA). Topologically, residues 140-156 (DRYRAIVNPMDMQTSGV) are cytoplasmic. The chain crosses the membrane as a helical span at residues 157 to 177 (LLWTSLKAVGIWVVSVLLAVP). Over 178 to 211 (EAVFSEVARIGSLDNSSFTACIPYPQTDELHPKI) the chain is Extracellular. An N-linked (GlcNAc...) asparagine glycan is attached at N192. A helical membrane pass occupies residues 212–235 (HSVLIFLVYFLIPLVIISIYYYHI). The Cytoplasmic portion of the chain corresponds to 236–266 (AKTLIKSAHNLPGEYNEHTKKQMETRKRLAK). Residues 267-287 (IVLVFVGCFVFCWFPNHVLYL) traverse the membrane as a helical segment. The Extracellular portion of the chain corresponds to 288-299 (YRSFNYKEIDPS). The helical transmembrane segment at 300–327 (LGHMIVTLVARVLSFSNSCVNPFALYLL) threads the bilayer. At 328-390 (SESFRKHFNS…GHSTKQEIAL (63 aa)) the chain is on the cytoplasmic side. C341 carries the S-palmitoyl cysteine lipid modification. The residue at position 352 (S352) is a Phosphoserine.

Belongs to the G-protein coupled receptor 1 family. As to expression, expressed in a subset of neurons of the pre-Botzinger complex. Within the pre-Botzinger complex, there is some overlap with neurons expressing Grpr with some cells expressing only Grpr or Nmbr while some cells express both. Expressed in dorsal root ganglion neurons and mast cells. Expressed in lung.

It localises to the cell membrane. Functionally, receptor for neuromedin-B. Contributes to the maintenance of basal sigh rate through signaling in the pre-Botzinger complex, a cluster of several thousand neurons in the ventrolateral medulla responsible for inspiration during respiratory activity. Contributes to the induction of sneezing following exposure to chemical irritants or allergens which causes release of NMB by nasal sensory neurons and activation of NMBR-expressing neurons in the sneeze-evoking region of the brainstem. These in turn activate neurons of the caudal ventral respiratory group, giving rise to the sneezing response. Contributes to induction of acute itch, possibly through its activation on dorsal root ganglion neurons by the NMB peptide. Plays a role in the innate immune response to influenza A virus infection by enhancing interferon alpha expression and reducing expression of IL6. Plays a role in CSF1-induced proliferation of osteoclast precursors by contributing to the positive regulation of the expression of the CSF1 receptor CSF1R. The polypeptide is Neuromedin-B receptor (Nmbr) (Mus musculus (Mouse)).